The sequence spans 287 residues: Protease HtpX (287 aa).

Transmembrane regions (helical) follow at residues 4–24 and 33–53; these read IFLLIATNMAILLVASIVMSI and GGLLVFAAIFGFGGAFISLAI. His-139 contributes to the Zn(2+) binding site. Glu-140 is an active-site residue. His-143 is a binding site for Zn(2+). Transmembrane regions (helical) follow at residues 154–174 and 195–215; these read LIQGVVNTFVIFAARVVAGII and AVVFVLDMLFGILASMIVAYF. Residue Glu-220 coordinates Zn(2+).

The protein belongs to the peptidase M48B family. Zn(2+) serves as cofactor.

It is found in the cell inner membrane. The protein is Protease HtpX of Shewanella pealeana (strain ATCC 700345 / ANG-SQ1).